Reading from the N-terminus, the 393-residue chain is Dual specificity mitogen-activated protein kinase kinase 1 (393 aa).

Residues Met-1–Ala-26 are disordered. Positions Ile-9–Ala-26 are enriched in polar residues. The Protein kinase domain maps to Phe-68 to Ile-361. Residues Leu-74–Val-82 and Lys-97 each bind ATP. Asp-190 functions as the Proton acceptor in the catalytic mechanism. Residues Ser-218 and Ser-222 each carry the phosphoserine; by RAF modification. The segment at Glu-270–Pro-307 is RAF1-binding. Phosphothreonine is present on Thr-286. At Thr-292 the chain carries Phosphothreonine; by MAPK1. The residue at position 298 (Ser-298) is a Phosphoserine; by PAK.

The protein belongs to the protein kinase superfamily. STE Ser/Thr protein kinase family. MAP kinase kinase subfamily. Found in a complex with at least BRAF, HRAS, MAP2K1, MAPK3/ERK1 and RGS14. Forms a heterodimer with MAP2K2/MEK2. Forms heterodimers with KSR2 which further dimerize to form tetramers. Interacts with KSR1 or KSR2 and BRAF; the interaction with KSR1 or KSR2 mediates KSR1-BRAF or KSR2-BRAF dimerization. Interacts with ARBB2, LAMTOR3, MAPK1/ERK2 and RAF1. Interacts with MAPK1/ERK2. Interacts with MORG1. Interacts with PPARG. Interacts with isoform 1 of VRK2. Interacts with SGK1. Interacts with BIRC6/bruce. Interacts with KAT7; the interaction promotes KAT7 phosphorylation. Interacts with RAF1 and NEK10; the interaction is required for ERK1/2-signaling pathway activation in response to UV irradiation. Interacts with TRAF3IP3. Interacts with MOS. Phosphorylation at Ser-218 and Ser-222 by MAP kinase kinase kinases (BRAF or MEKK1) positively regulates the kinase activity. Also phosphorylated at Thr-292 by MAPK1/ERK2 and at Ser-298 by PAK. MAPK1/ERK2 phosphorylation of Thr-292 occurs in response to cellular adhesion and leads to inhibition of Ser-298 phosphorylation by PAK. Autophosphorylated at Ser-218 and Ser-222, autophosphosphorylation is promoted by NEK10 following UV irradiation.

Its subcellular location is the cytoplasm. It localises to the cytoskeleton. The protein localises to the microtubule organizing center. The protein resides in the centrosome. It is found in the spindle pole body. Its subcellular location is the nucleus. It localises to the membrane. The enzyme catalyses L-seryl-[protein] + ATP = O-phospho-L-seryl-[protein] + ADP + H(+). It catalyses the reaction L-threonyl-[protein] + ATP = O-phospho-L-threonyl-[protein] + ADP + H(+). It carries out the reaction L-tyrosyl-[protein] + ATP = O-phospho-L-tyrosyl-[protein] + ADP + H(+). Its activity is regulated as follows. Ras proteins such as HRAS mediate the activation of RAF proteins such as RAF1 or BRAF which in turn activate extracellular signal-regulated kinases (ERK) through MAPK (mitogen-activated protein kinases) and ERK kinases MAP2K1/MEK1 and MAP2K2/MEK2. Activation occurs through phosphorylation of Ser-218 and Ser-222. MAP2K1/MEK1 binds KSR1 or KSR2 releasing the inhibitory intramolecular interaction between KSR1 or KSR2 protein kinase and N-terminal domains. This allows KSR1 or KSR2 dimerization with BRAF leading to BRAF activation and phosphorylation of MAP2K1. MAP2K1/MEK1 is also the target of negative feed-back regulation by its substrate kinases, such as MAPK1/ERK2. These phosphorylate MAP2K1/MEK1 on Thr-292, thereby facilitating dephosphorylation of the activating residues Ser-218 and Ser-222. Inhibited by serine/threonine phosphatase 2A. Functionally, dual specificity protein kinase which acts as an essential component of the MAP kinase signal transduction pathway. Binding of extracellular ligands such as growth factors, cytokines and hormones to their cell-surface receptors activates RAS and this initiates RAF1 activation. RAF1 then further activates the dual-specificity protein kinases MAP2K1/MEK1 and MAP2K2/MEK2. Both MAP2K1/MEK1 and MAP2K2/MEK2 function specifically in the MAPK/ERK cascade, and catalyze the concomitant phosphorylation of a threonine and a tyrosine residue in a Thr-Glu-Tyr sequence located in the extracellular signal-regulated kinases MAPK3/ERK1 and MAPK1/ERK2, leading to their activation and further transduction of the signal within the MAPK/ERK cascade. Activates BRAF in a KSR1 or KSR2-dependent manner; by binding to KSR1 or KSR2 releases the inhibitory intramolecular interaction between KSR1 or KSR2 protein kinase and N-terminal domains which promotes KSR1 or KSR2-BRAF dimerization and BRAF activation. Depending on the cellular context, this pathway mediates diverse biological functions such as cell growth, adhesion, survival and differentiation, predominantly through the regulation of transcription, metabolism and cytoskeletal rearrangements. One target of the MAPK/ERK cascade is peroxisome proliferator-activated receptor gamma (PPARG), a nuclear receptor that promotes differentiation and apoptosis. MAP2K1/MEK1 has been shown to export PPARG from the nucleus. The MAPK/ERK cascade is also involved in the regulation of endosomal dynamics, including lysosome processing and endosome cycling through the perinuclear recycling compartment (PNRC), as well as in the fragmentation of the Golgi apparatus during mitosis. The sequence is that of Dual specificity mitogen-activated protein kinase kinase 1 (MAP2K1) from Cricetulus griseus (Chinese hamster).